Reading from the N-terminus, the 553-residue chain is Serine protease 53 (553 aa).

The signal sequence occupies residues 1–23 (MKWCWGPVLLIAGATVLMEGLQA). Peptidase S1 domains lie at 24–273 (AQRA…ARVQ) and 294–526 (VACG…SLDW). The disordered stretch occupies residues 27-46 (ACGQRGPGPPKPQEGNTVPG). Cys62 and Cys78 are joined by a disulfide. Catalysis depends on charge relay system residues His77 and Asp128. Disulfide bonds link Cys158/Cys230, Cys187/Cys209, Cys220/Cys249, and Cys326/Cys342. Active-site charge relay system residues include Ser224, His341, and Asp382. Intrachain disulfides connect Cys444–Cys464 and Cys474–Cys502. Residue Ser478 is the Charge relay system of the active site.

The protein belongs to the peptidase S1 family. In terms of tissue distribution, predominantly detected in testis, liver, heart and ovary, as well as in several tumor cell lines.

It is found in the secreted. Functionally, in vitro can degrade the fibrinogen alpha chain of as well as pro-urokinase-type plasminogen activator. This chain is Serine protease 53 (PRSS53), found in Homo sapiens (Human).